The chain runs to 310 residues: MAPSFVSIDTTPDFDMTPTSSKSADSGKRTLLLAPPSIATQEDKLRTLFTTYDRSTTDLQMLDRVSAGFVSLPANTYDLVLVLTGTDGTRRSEALQLLKREVYAAVVPAMKGGAKLQTEDNFFGEAEDREAVLAGLVKKETGFEKMDVGNGAAVPLRLGRKKKAAPAPAPVVQPPPIISSDDNDLNDDELIDEDTLLSADDLKRPIVPPPECQPKAGKRRRACKDCTCGLAAQIEAEDRERREAADKSLNVMKLESDDLNELDFTVQGKTGSCGNCALGDAFRCDGCPFIGLPAFKPGQEVQILNDVAQL.

Disordered stretches follow at residues 1-30 and 165-184; these read MAPSFVSIDTTPDFDMTPTSSKSADSGKRT and APAPAPVVQPPPIISSDDND. Positions 24-154 are N-terminal SAM-like domain; that stretch reads ADSGKRTLLL…KMDVGNGAAV (131 aa). Residues 155–202 form a linker region; sequence PLRLGRKKKAAPAPAPVVQPPPIISSDDNDLNDDELIDEDTLLSADDL. Residues 167–177 are compositionally biased toward pro residues; it reads APAPVVQPPPI. [2Fe-2S] cluster-binding residues include Cys-212, Cys-223, Cys-226, and Cys-228. The segment at 212-228 is fe-S binding site A; that stretch reads CQPKAGKRRRACKDCTC. Residues Cys-273, Cys-276, Cys-284, and Cys-287 each coordinate [4Fe-4S] cluster. 2 short sequence motifs (cx2C motif) span residues 273 to 276 and 284 to 287; these read CGNC and CDGC. The tract at residues 273–287 is fe-S binding site B; it reads CGNCALGDAFRCDGC.

Belongs to the anamorsin family. In terms of assembly, monomer. Interacts with tah18. Interacts with mia40. It depends on [2Fe-2S] cluster as a cofactor. [4Fe-4S] cluster serves as cofactor.

It is found in the cytoplasm. Its subcellular location is the mitochondrion intermembrane space. Functionally, component of the cytosolic iron-sulfur (Fe-S) protein assembly (CIA) machinery required for the maturation of extramitochondrial Fe-S proteins. Part of an electron transfer chain functioning in an early step of cytosolic Fe-S biogenesis, facilitating the de novo assembly of a [4Fe-4S] cluster on the scaffold complex cfd1-nbp35. Electrons are transferred to dre2 from NADPH via the FAD- and FMN-containing protein tah18. Tah18-dre2 are also required for the assembly of the diferric tyrosyl radical cofactor of ribonucleotide reductase (RNR), probably by providing electrons for reduction during radical cofactor maturation in the catalytic small subunit rnr2. The protein is Fe-S cluster assembly protein dre2 of Emericella nidulans (strain FGSC A4 / ATCC 38163 / CBS 112.46 / NRRL 194 / M139) (Aspergillus nidulans).